Consider the following 87-residue polypeptide: Pyocin-S2 immunity protein (87 aa).

It belongs to the colicins ColE2/ColE8/ColE9 and pyocins S1/S2 family.

The sequence is that of Pyocin-S2 immunity protein (imm2) from Pseudomonas aeruginosa (strain ATCC 15692 / DSM 22644 / CIP 104116 / JCM 14847 / LMG 12228 / 1C / PRS 101 / PAO1).